The sequence spans 199 residues: Probable GTP-binding protein EngB (199 aa).

In terms of domain architecture, EngB-type G spans 22–195 (QLPEIALSGR…WEWIEQQCDI (174 aa)). GTP is bound by residues 30 to 37 (GRSNVGKS), 57 to 61 (GKTQT), 75 to 78 (DVPG), 142 to 145 (TKMD), and 174 to 176 (FSA). The Mg(2+) site is built by Ser37 and Thr59.

Belongs to the TRAFAC class TrmE-Era-EngA-EngB-Septin-like GTPase superfamily. EngB GTPase family. Requires Mg(2+) as cofactor.

In terms of biological role, necessary for normal cell division and for the maintenance of normal septation. This chain is Probable GTP-binding protein EngB, found in Latilactobacillus sakei subsp. sakei (strain 23K) (Lactobacillus sakei subsp. sakei).